Here is a 150-residue protein sequence, read N- to C-terminus: MILQGKKVIAIGDRDGIPGPAIEECVKSAGAEIAFSSTECFVUTAAGAMDLEIQQKVKDAAESIGADNLVVVLGGAEAESSGLSAETVTTGDPTYAGPLAGVELGLKVYHVVEDELKAEFDEAIYEDQCGMMEMVLDVDGIKEEMNRVRG.

The active site involves selenocysteine 43. Position 43 (selenocysteine 43) is a non-standard amino acid, selenocysteine.

The protein belongs to the GrdA family. As to quaternary structure, monomer. Component of the glycine, sarcosine and betaine reductase complexes, together with components B and C.

The catalysed reaction is acetyl phosphate + [thioredoxin]-disulfide + NH4(+) + H2O = [thioredoxin]-dithiol + glycine + phosphate + H(+). It carries out the reaction acetyl phosphate + methylamine + [thioredoxin]-disulfide + H2O = sarcosine + [thioredoxin]-dithiol + phosphate + H(+). It catalyses the reaction acetyl phosphate + trimethylamine + [thioredoxin]-disulfide + H2O = glycine betaine + [thioredoxin]-dithiol + phosphate + H(+). In terms of biological role, in the first step of glycine, betaine and sarcosine reductases, the substrate is bound to component PB via a Schiff base intermediate. Then the PB-activated substrate is nucleophilically attacked by the selenol anion of component PA to transform it to a carboxymethylated selenoether and the respective amine. By action of component PC, acetyl phosphate is formed, leaving component PA in its oxidized state. Finally component PA becomes reduced by the thioredoxin system to start a new catalytic cycle of reductive deamination. In Gottschalkia purinilytica (Clostridium purinilyticum), this protein is Glycine/sarcosine/betaine reductase complex component A (grdA).